A 141-amino-acid chain; its full sequence is 6,7-dimethyl-8-ribityllumazine synthase (141 aa).

5-amino-6-(D-ribitylamino)uracil-binding positions include phenylalanine 14, 46-48 (VFD), and 70-72 (CVI). 75–76 (ET) is a (2S)-2-hydroxy-3-oxobutyl phosphate binding site. Residue histidine 78 is the Proton donor of the active site. Leucine 103 serves as a coordination point for 5-amino-6-(D-ribitylamino)uracil. Residue arginine 118 participates in (2S)-2-hydroxy-3-oxobutyl phosphate binding.

In terms of assembly, forms an icosahedral capsid composed of 60 subunits, arranged as a dodecamer of pentamers.

The catalysed reaction is (2S)-2-hydroxy-3-oxobutyl phosphate + 5-amino-6-(D-ribitylamino)uracil = 6,7-dimethyl-8-(1-D-ribityl)lumazine + phosphate + 2 H2O + H(+). Its pathway is cofactor biosynthesis; riboflavin biosynthesis; riboflavin from 2-hydroxy-3-oxobutyl phosphate and 5-amino-6-(D-ribitylamino)uracil: step 1/2. Its function is as follows. Catalyzes the formation of 6,7-dimethyl-8-ribityllumazine by condensation of 5-amino-6-(D-ribitylamino)uracil with 3,4-dihydroxy-2-butanone 4-phosphate. This is the penultimate step in the biosynthesis of riboflavin. This is 6,7-dimethyl-8-ribityllumazine synthase (ribH) from Methanocaldococcus jannaschii (strain ATCC 43067 / DSM 2661 / JAL-1 / JCM 10045 / NBRC 100440) (Methanococcus jannaschii).